The sequence spans 630 residues: Coiled-coil domain-containing protein 120 (630 aa).

The segment at 31-70 (RLRGLLDRQRTLQEALSLKLQELRKVCLQEAELTGQLPPE) is involved in CYTH2-binding. Residues 109–173 (ELALEALERE…LRDVRARLGL (65 aa)) adopt a coiled-coil conformation. 2 stretches are compositionally biased toward low complexity: residues 212–222 (HSESSSLSESG) and 282–297 (ASPTSPTRSLPRSASS). 2 disordered regions span residues 212–435 (HSES…GAPR) and 457–534 (GGGT…NPLL). Polar residues predominate over residues 326–335 (RQWSGSQDSQ). Phosphoserine is present on residues S358 and S360. Low complexity predominate over residues 421–434 (ARPSSAAPASRGAP). The residue at position 435 (R435) is an Omega-N-methylarginine.

Interacts with NIN and CEP170; leading to recruit them to centrosomes. Directly interacts with CYTH2; this interaction stabilizes CCDC120, possibly by preventing ubiquitination. In terms of processing, ubiquitinated; interaction with CYTH2 may prevent ubiquitination.

It is found in the cytoplasm. The protein localises to the cytoskeleton. It localises to the microtubule organizing center. The protein resides in the centrosome. Its subcellular location is the centriole. It is found in the cell projection. The protein localises to the neuron projection. It localises to the growth cone. The protein resides in the endosome. Its function is as follows. Centriolar protein required for centriole subdistal appendage assembly and microtubule anchoring in interphase cells. Together with CCDC68, cooperate with subdistal appendage components ODF2, NIN and CEP170 for hierarchical subdistal appendage assembly. Recruits NIN and CEP170 to centrosomes. Also required for neurite growth. Localizes CYTH2 to vesicles to allow its transport along neurites, and subsequent ARF6 activation and neurite growth. This is Coiled-coil domain-containing protein 120 (CCDC120) from Homo sapiens (Human).